The sequence spans 100 residues: Defensin-B4 (100 aa).

Positions 1 to 22 (MRASLLLFILLVYLAHAPQAQG) are cleaved as a signal peptide. Residues 23–26 (VFGP) constitute a propeptide that is removed on maturation. 3 disulfide bridges follow: cysteine 29–cysteine 56, cysteine 36–cysteine 50, and cysteine 40–cysteine 57. The tract at residues 60–100 (STGTSSSQGSHEVPVINSEPALESKPEPQDTQEEEATMVSE) is disordered. Positions 89 to 100 (DTQEEEATMVSE) are enriched in acidic residues.

This sequence belongs to the beta-defensin family. As to expression, highly expressed in kidney, lowly expressed in spleen, and expressed at lower levels in lung.

It localises to the secreted. In terms of biological role, has antimicrobial activity. The protein is Defensin-B4 of Ornithorhynchus anatinus (Duckbill platypus).